Reading from the N-terminus, the 201-residue chain is Dephospho-CoA kinase (201 aa).

Residues Leu-10–Arg-201 form the DPCK domain. Ala-18–Thr-23 serves as a coordination point for ATP.

Belongs to the CoaE family.

It localises to the cytoplasm. It catalyses the reaction 3'-dephospho-CoA + ATP = ADP + CoA + H(+). Its pathway is cofactor biosynthesis; coenzyme A biosynthesis; CoA from (R)-pantothenate: step 5/5. Its function is as follows. Catalyzes the phosphorylation of the 3'-hydroxyl group of dephosphocoenzyme A to form coenzyme A. This Synechocystis sp. (strain ATCC 27184 / PCC 6803 / Kazusa) protein is Dephospho-CoA kinase.